Consider the following 320-residue polypeptide: Beta-ketoacyl-[acyl-carrier-protein] synthase III (320 aa).

Catalysis depends on residues Cys-114 and His-247. Residues 248–252 (QANRR) are ACP-binding. Asn-277 is an active-site residue.

Belongs to the thiolase-like superfamily. FabH family. As to quaternary structure, homodimer.

Its subcellular location is the cytoplasm. It catalyses the reaction malonyl-[ACP] + acetyl-CoA + H(+) = 3-oxobutanoyl-[ACP] + CO2 + CoA. The protein operates within lipid metabolism; fatty acid biosynthesis. Catalyzes the condensation reaction of fatty acid synthesis by the addition to an acyl acceptor of two carbons from malonyl-ACP. Catalyzes the first condensation reaction which initiates fatty acid synthesis and may therefore play a role in governing the total rate of fatty acid production. Possesses both acetoacetyl-ACP synthase and acetyl transacylase activities. Its substrate specificity determines the biosynthesis of branched-chain and/or straight-chain of fatty acids. The protein is Beta-ketoacyl-[acyl-carrier-protein] synthase III of Neisseria meningitidis serogroup C (strain 053442).